The primary structure comprises 417 residues: UDP-N-acetylglucosamine 1-carboxyvinyltransferase (417 aa).

Phosphoenolpyruvate is bound at residue 22-23 (KN). Arg93 lines the UDP-N-acetyl-alpha-D-glucosamine pocket. Cys117 serves as the catalytic Proton donor. Cys117 is modified (2-(S-cysteinyl)pyruvic acid O-phosphothioketal). UDP-N-acetyl-alpha-D-glucosamine-binding positions include 122-126 (RPVDQ), Asp304, and Ile326.

It belongs to the EPSP synthase family. MurA subfamily.

It is found in the cytoplasm. The catalysed reaction is phosphoenolpyruvate + UDP-N-acetyl-alpha-D-glucosamine = UDP-N-acetyl-3-O-(1-carboxyvinyl)-alpha-D-glucosamine + phosphate. The protein operates within cell wall biogenesis; peptidoglycan biosynthesis. In terms of biological role, cell wall formation. Adds enolpyruvyl to UDP-N-acetylglucosamine. In Neisseria meningitidis serogroup A / serotype 4A (strain DSM 15465 / Z2491), this protein is UDP-N-acetylglucosamine 1-carboxyvinyltransferase.